The chain runs to 90 residues: Probable Fe(2+)-trafficking protein (90 aa).

Belongs to the Fe(2+)-trafficking protein family.

In terms of biological role, could be a mediator in iron transactions between iron acquisition and iron-requiring processes, such as synthesis and/or repair of Fe-S clusters in biosynthetic enzymes. This Azoarcus sp. (strain BH72) protein is Probable Fe(2+)-trafficking protein.